Reading from the N-terminus, the 960-residue chain is Glycine dehydrogenase (decarboxylating) (960 aa).

At lysine 709 the chain carries N6-(pyridoxal phosphate)lysine.

This sequence belongs to the GcvP family. As to quaternary structure, the glycine cleavage system is composed of four proteins: P, T, L and H. Requires pyridoxal 5'-phosphate as cofactor.

It catalyses the reaction N(6)-[(R)-lipoyl]-L-lysyl-[glycine-cleavage complex H protein] + glycine + H(+) = N(6)-[(R)-S(8)-aminomethyldihydrolipoyl]-L-lysyl-[glycine-cleavage complex H protein] + CO2. Functionally, the glycine cleavage system catalyzes the degradation of glycine. The P protein binds the alpha-amino group of glycine through its pyridoxal phosphate cofactor; CO(2) is released and the remaining methylamine moiety is then transferred to the lipoamide cofactor of the H protein. This Hahella chejuensis (strain KCTC 2396) protein is Glycine dehydrogenase (decarboxylating).